We begin with the raw amino-acid sequence, 218 residues long: Probable transaldolase (218 aa).

The Schiff-base intermediate with substrate role is filled by Lys-83.

This sequence belongs to the transaldolase family. Type 3B subfamily.

It is found in the cytoplasm. The enzyme catalyses D-sedoheptulose 7-phosphate + D-glyceraldehyde 3-phosphate = D-erythrose 4-phosphate + beta-D-fructose 6-phosphate. It functions in the pathway carbohydrate degradation; pentose phosphate pathway; D-glyceraldehyde 3-phosphate and beta-D-fructose 6-phosphate from D-ribose 5-phosphate and D-xylulose 5-phosphate (non-oxidative stage): step 2/3. In terms of biological role, transaldolase is important for the balance of metabolites in the pentose-phosphate pathway. In Parvibaculum lavamentivorans (strain DS-1 / DSM 13023 / NCIMB 13966), this protein is Probable transaldolase.